A 387-amino-acid chain; its full sequence is 3-ketoacyl-CoA thiolase (387 aa).

The active-site Acyl-thioester intermediate is cysteine 91. Catalysis depends on proton acceptor residues histidine 343 and cysteine 373.

This sequence belongs to the thiolase-like superfamily. Thiolase family. Heterotetramer of two alpha chains (FadB) and two beta chains (FadA).

It localises to the cytoplasm. It catalyses the reaction an acyl-CoA + acetyl-CoA = a 3-oxoacyl-CoA + CoA. Its pathway is lipid metabolism; fatty acid beta-oxidation. Catalyzes the final step of fatty acid oxidation in which acetyl-CoA is released and the CoA ester of a fatty acid two carbons shorter is formed. This is 3-ketoacyl-CoA thiolase from Shewanella denitrificans (strain OS217 / ATCC BAA-1090 / DSM 15013).